Here is a 770-residue protein sequence, read N- to C-terminus: DNA ligase 1 (770 aa).

Positions 1-18 (MSTGEGTAEQTATGTPAQ) are enriched in low complexity. Residues 1–27 (MSTGEGTAEQTATGTPAQNGRESIPSD) are disordered. NAD(+) contacts are provided by residues 57–61 (DAEFD), 106–107 (SL), and glutamate 142. The N6-AMP-lysine intermediate role is filled by lysine 144. NAD(+) contacts are provided by arginine 165, glutamate 202, lysine 318, and lysine 342. 4 residues coordinate Zn(2+): cysteine 439, cysteine 442, cysteine 458, and cysteine 464. The BRCT domain occupies 657–746 (STPRTLEGLT…PAAVGDAAEA (90 aa)). Positions 741–770 (GDAAEADGGDAPEESAALQEEKAAAVEETA) are disordered. Residues 744 to 753 (AEADGGDAPE) show a composition bias toward acidic residues. Over residues 759-770 (QEEKAAAVEETA) the composition is skewed to basic and acidic residues.

It belongs to the NAD-dependent DNA ligase family. LigA subfamily. Requires Mg(2+) as cofactor. The cofactor is Mn(2+).

The enzyme catalyses NAD(+) + (deoxyribonucleotide)n-3'-hydroxyl + 5'-phospho-(deoxyribonucleotide)m = (deoxyribonucleotide)n+m + AMP + beta-nicotinamide D-nucleotide.. In terms of biological role, DNA ligase that catalyzes the formation of phosphodiester linkages between 5'-phosphoryl and 3'-hydroxyl groups in double-stranded DNA using NAD as a coenzyme and as the energy source for the reaction. It is essential for DNA replication and repair of damaged DNA. This is DNA ligase 1 from Pseudarthrobacter chlorophenolicus (strain ATCC 700700 / DSM 12829 / CIP 107037 / JCM 12360 / KCTC 9906 / NCIMB 13794 / A6) (Arthrobacter chlorophenolicus).